The primary structure comprises 435 residues: Probable glycine dehydrogenase (decarboxylating) subunit 1 (435 aa).

It belongs to the GcvP family. N-terminal subunit subfamily. As to quaternary structure, the glycine cleavage system is composed of four proteins: P, T, L and H. In this organism, the P 'protein' is a heterodimer of two subunits.

The catalysed reaction is N(6)-[(R)-lipoyl]-L-lysyl-[glycine-cleavage complex H protein] + glycine + H(+) = N(6)-[(R)-S(8)-aminomethyldihydrolipoyl]-L-lysyl-[glycine-cleavage complex H protein] + CO2. In terms of biological role, the glycine cleavage system catalyzes the degradation of glycine. The P protein binds the alpha-amino group of glycine through its pyridoxal phosphate cofactor; CO(2) is released and the remaining methylamine moiety is then transferred to the lipoamide cofactor of the H protein. The polypeptide is Probable glycine dehydrogenase (decarboxylating) subunit 1 (Coprothermobacter proteolyticus (strain ATCC 35245 / DSM 5265 / OCM 4 / BT)).